The primary structure comprises 330 residues: GDP-mannose transporter (330 aa).

Over 1 to 13 (MSQLKVDNGPLSH) the chain is Cytoplasmic. The helical transmembrane segment at 14-34 (VANSGPISIGAYCFSSIMMTV) threads the bilayer. The Lumenal portion of the chain corresponds to 35–48 (TNKFVVNLKGFNMN). A helical membrane pass occupies residues 49–69 (FVMLFVQAAVCVNLLFFLRLL). Topologically, residues 70 to 81 (GYAKFRPLNRTD) are cytoplasmic. A helical membrane pass occupies residues 82-98 (AKNWFPITIFLVLMIYT). Topologically, residues 99–104 (SSKSLQ) are lumenal. The chain crosses the membrane as a helical span at residues 105–124 (YLAVPIYTIFKNLTIILIAY). Over 125–138 (GEVLFFGGSVTAME) the chain is Cytoplasmic. The chain crosses the membrane as a helical span at residues 139–155 (LSSFLLMVLSSVVATLG). The Lumenal segment spans residues 156-170 (DQQALKKTADAGASL). A helical transmembrane segment spans residues 171–191 (FNIGYMWMFINCLSSAAFVLV). The Cytoplasmic segment spans residues 192 to 203 (MRKRIKLTNFKD). The helical transmembrane segment at 204–224 (FDTMFYNNILSMPVLLALSFL) threads the bilayer. Topologically, residues 225 to 241 (MEDWSTENLTKNLSRDS) are lumenal. The helical transmembrane segment at 242–262 (VTAMIISGMTAVCISYCSGWC) threads the bilayer. The Cytoplasmic segment spans residues 263 to 269 (VRVTSST). The helical transmembrane segment at 270 to 290 (TYSMVGALNKLPIALSGLIFF) threads the bilayer. The Lumenal segment spans residues 291–294 (DAPK). Residues 295 to 315 (NFLSIFSIFLGFLSGIVYAVA) traverse the membrane as a helical segment. At 316–330 (KQKKQQNPQPSAPIK) the chain is on the cytoplasmic side.

The protein belongs to the TPT transporter family. SLC35D subfamily. In terms of assembly, homooligomer.

The protein resides in the golgi apparatus membrane. It localises to the cytoplasmic vesicle membrane. The protein localises to the endoplasmic reticulum membrane. Functionally, involved in the import of GDP-mannose from the cytoplasm into the Golgi lumen. The chain is GDP-mannose transporter (VRG4) from Kluyveromyces lactis (strain ATCC 8585 / CBS 2359 / DSM 70799 / NBRC 1267 / NRRL Y-1140 / WM37) (Yeast).